Consider the following 312-residue polypeptide: tRNA pseudouridine synthase B (312 aa).

Residue Asp-37 is the Nucleophile of the active site.

This sequence belongs to the pseudouridine synthase TruB family. Type 1 subfamily.

It carries out the reaction uridine(55) in tRNA = pseudouridine(55) in tRNA. Functionally, responsible for synthesis of pseudouridine from uracil-55 in the psi GC loop of transfer RNAs. The sequence is that of tRNA pseudouridine synthase B from Deinococcus geothermalis (strain DSM 11300 / CIP 105573 / AG-3a).